We begin with the raw amino-acid sequence, 352 residues long: Probable RNA methyltransferase Mpe_A3613 (352 aa).

The Proton acceptor role is filled by glutamate 88. One can recognise a Radical SAM core domain in the interval 91-317 (LLPRDGLCVS…TKLRRSAGQD (227 aa)). Cysteine 98 and cysteine 322 form a disulfide bridge. 3 residues coordinate [4Fe-4S] cluster: cysteine 105, cysteine 109, and cysteine 112. Residues 150 to 151 (GE), serine 180, 203 to 205 (SLH), and asparagine 279 contribute to the S-adenosyl-L-methionine site. Cysteine 322 acts as the S-methylcysteine intermediate in catalysis.

This sequence belongs to the radical SAM superfamily. RlmN family. The cofactor is [4Fe-4S] cluster.

It is found in the cytoplasm. This is Probable RNA methyltransferase Mpe_A3613 from Methylibium petroleiphilum (strain ATCC BAA-1232 / LMG 22953 / PM1).